We begin with the raw amino-acid sequence, 1535 residues long: ABC multidrug transporter atrF (1535 aa).

Residues 1 to 115 (MADDHRQPEA…DEQASSTDEY (115 aa)) are disordered. The N-linked (GlcNAc...) asparagine glycan is linked to asparagine 33. The segment covering 34 to 45 (TTSTSETDASAD) has biased composition (low complexity). Over residues 46 to 76 (ADARWGERNQGDPVSRRGAMEEFEEMRREVT) the composition is skewed to basic and acidic residues. Residues 79–93 (SLHRTRSAKDARRRS) are compositionally biased toward basic residues. 4 N-linked (GlcNAc...) asparagine glycosylation sites follow: asparagine 149, asparagine 274, asparagine 287, and asparagine 351. The ABC transporter 1 domain maps to 185–427 (VPALHFGKRP…FVDLGFYCPE (243 aa)). The next 7 membrane-spanning stretches (helical) occupy residues 540–560 (LYTKYFIIVSNGLIVSSLFYG), 573–593 (GALFFSILFLVLQLTELMPAV), 618–638 (VVVDFPAIFCMVVPFTIIVYF), 646–666 (ASKFFIYFLFVYTTTFCITSL), 680–700 (AVRFAGIALNVLILFVGYVIP), 703–723 (GLIDGSIWFGWLFYVNPLSYS), and 791–811 (FGVVIAFTVLYLLVTVIAAEV). Residues 834 to 868 (KAQNGKGNDEEQVQNTGDNAALSRGEAKSSSSGEA) are disordered. The 239-residue stretch at 879–1117 (FTWSNVEYTV…DVIKYFADRG (239 aa)) folds into the ABC transporter 2 domain. The N-linked (GlcNAc...) asparagine glycan is linked to asparagine 892. Residue 915-922 (GASGAGKT) coordinates ATP. The next 6 helical transmembrane spans lie at 1212–1232 (YGKLFVSVIIGIFNGFTFWML), 1246–1266 (IFLIILIPPIVLNSIVPKFYI), 1295–1315 (IPMAIVSALIYWLLWYYPVGF), 1320–1340 (SSAGYVFLMSMLFFLFQASWG), 1342–1362 (WICAFAPSFTVISNVLPFFFV), and 1384–1406 (WMYYVNPVTWWLRGVISSVFPSV). N-linked (GlcNAc...) asparagine glycosylation is present at asparagine 1459. A run of 2 helical transmembrane segments spans residues 1477–1497 (CFGIFLAFVIINWALVYFFIY) and 1503–1523 (GWSFGMGYLFGGVGVMIEGVK).

This sequence belongs to the ABC transporter superfamily. ABCG family. PDR (TC 3.A.1.205) subfamily.

The protein resides in the cell membrane. It carries out the reaction voriconazole(in) + ATP + H2O = voriconazole(out) + ADP + phosphate + H(+). Its function is as follows. Pleiotropic ABC efflux transporter involved in the basal level of azole susceptibility. Confers resistance to voriconazole. This Aspergillus flavus (strain ATCC 200026 / FGSC A1120 / IAM 13836 / NRRL 3357 / JCM 12722 / SRRC 167) protein is ABC multidrug transporter atrF.